The following is a 141-amino-acid chain: Large ribosomal subunit protein uL11 (141 aa).

Belongs to the universal ribosomal protein uL11 family. Part of the ribosomal stalk of the 50S ribosomal subunit. Interacts with L10 and the large rRNA to form the base of the stalk. L10 forms an elongated spine to which L12 dimers bind in a sequential fashion forming a multimeric L10(L12)X complex. One or more lysine residues are methylated.

Forms part of the ribosomal stalk which helps the ribosome interact with GTP-bound translation factors. This Helicobacter hepaticus (strain ATCC 51449 / 3B1) protein is Large ribosomal subunit protein uL11.